The sequence spans 838 residues: V-type proton ATPase 116 kDa subunit a 1 (838 aa).

At 1–388 (MGELFRSEEM…DAYGIGTYRE (388 aa)) the chain is on the cytoplasmic side. Residues 389–407 (INPAPYTIITFPFLFAVMF) form a helical membrane-spanning segment. Topologically, residues 408–409 (GD) are vacuolar. The chain crosses the membrane as a helical span at residues 410–426 (FGHGILMTLIAIWMVLR). Residues 427-441 (ESRILSQKSDNEMFS) lie on the Cytoplasmic side of the membrane. A helical transmembrane segment spans residues 442-471 (TVFSGRYIILLMGLFSTYTGLIYNDCFSKS). Residues 472 to 535 (LNMFGSSWSV…ANNKLAFLNS (64 aa)) are Vacuolar-facing. A helical membrane pass occupies residues 536–555 (FKMKMSVILGIIHMLFGVML). Topologically, residues 556–573 (SLLNHIYFKKPLNIYLGF) are cytoplasmic. A helical membrane pass occupies residues 574 to 594 (IPEMIFMSSLFGYLVILIFYK). The Vacuolar segment spans residues 595-639 (WTAYDAHTSKEAPSPLIHFINMFLFSYGDTSNKMLYRGQKGIQCF). The helical transmembrane segment at 640–659 (LVVVALLCVPWMLVAKPLVL) threads the bilayer. Residues 660–725 (RHQYLRRKHL…DTVVYQAIHT (66 aa)) lie on the Cytoplasmic side of the membrane. The chain crosses the membrane as a helical span at residues 726-750 (IEYCLGCISNTASYLRLWALSLAHA). The Vacuolar segment spans residues 751-771 (QLSEVLWTMVIHTGLSVRSLA). A helical membrane pass occupies residues 772–810 (GGFGLVFIFAAFATLTVAILLVMEGLSAFLHALRLHWIE). The Cytoplasmic segment spans residues 811–838 (FQNKFYTGTGFKFLPFSFDPIREGKFDD).

This sequence belongs to the V-ATPase 116 kDa subunit family. In terms of assembly, V-ATPase is a heteromultimeric enzyme made up of two complexes: the ATP-hydrolytic V1 complex and the proton translocation V0 complex. The V1 complex consists of three catalytic AB heterodimers that form a heterohexamer, three peripheral stalks each consisting of EG heterodimers, one central rotor including subunits D and F, and the regulatory subunits C and H. The proton translocation complex V0 consists of the proton transport subunit a, a ring of proteolipid subunits c9c'', rotary subunit d, subunits e and f, and two accessory subunits. In terms of tissue distribution, detected in brain (at protein level). Highest expression in brain, intermediate levels in kidney, and relatively low levels in bone and liver.

It localises to the cytoplasmic vesicle. Its subcellular location is the clathrin-coated vesicle membrane. The protein resides in the secretory vesicle. The protein localises to the synaptic vesicle membrane. It is found in the melanosome. In terms of biological role, subunit of the V0 complex of vacuolar(H+)-ATPase (V-ATPase), a multisubunit enzyme composed of a peripheral complex (V1) that hydrolyzes ATP and a membrane integral complex (V0) that translocates protons. V-ATPase is responsible for acidifying and maintaining the pH of intracellular compartments and in some cell types, is targeted to the plasma membrane, where it is responsible for acidifying the extracellular environment. Required for assembly and activity of the vacuolar ATPase. The polypeptide is V-type proton ATPase 116 kDa subunit a 1 (ATP6V0A1) (Gallus gallus (Chicken)).